A 95-amino-acid polypeptide reads, in one-letter code: Putative pterin-4-alpha-carbinolamine dehydratase (95 aa).

The protein belongs to the pterin-4-alpha-carbinolamine dehydratase family.

It catalyses the reaction (4aS,6R)-4a-hydroxy-L-erythro-5,6,7,8-tetrahydrobiopterin = (6R)-L-erythro-6,7-dihydrobiopterin + H2O. The protein is Putative pterin-4-alpha-carbinolamine dehydratase of Prochlorococcus marinus (strain NATL2A).